Here is a 191-residue protein sequence, read N- to C-terminus: Peptidyl-tRNA hydrolase (191 aa).

Tyr17 contributes to the tRNA binding site. His22 acts as the Proton acceptor in catalysis. 3 residues coordinate tRNA: Tyr68, Asn70, and Asn116.

Belongs to the PTH family. Monomer.

It localises to the cytoplasm. It catalyses the reaction an N-acyl-L-alpha-aminoacyl-tRNA + H2O = an N-acyl-L-amino acid + a tRNA + H(+). Functionally, hydrolyzes ribosome-free peptidyl-tRNAs (with 1 or more amino acids incorporated), which drop off the ribosome during protein synthesis, or as a result of ribosome stalling. Its function is as follows. Catalyzes the release of premature peptidyl moieties from peptidyl-tRNA molecules trapped in stalled 50S ribosomal subunits, and thus maintains levels of free tRNAs and 50S ribosomes. The chain is Peptidyl-tRNA hydrolase from Francisella tularensis subsp. tularensis (strain FSC 198).